Here is a 550-residue protein sequence, read N- to C-terminus: MLKNINPTKTVAWSELKTLFDANADLKISTLFANDPQRFKAFSRQFDDHLLVDFSKNLITEEIFTKLLALAEEVDLKGAIKAQFSGEKINVTENRAVLHSALRNRSNTPVFVDGENVMPKVNAVLEKMKAFCTKVHSGEWKGYTGKAITDIVNIGIGGSDLGPFMVTEALRPYKVEGIDAHFVSNVDGTHIVETLAKVDPETTLFLVASKTFTTQETMTNAHSAREWFLNFAEDETFVAKHFAALSTNADAVAEFGIDVDNMFEFWDWVGGRYSIWSAIGLSIALTIGFDNYEVLLGGAHEMDKHFEETDFENNIPVILAVIGVWYNNFHGAESEAILPYDQYMHRFPAYFQQGNMESNGKCVDRNGESVDYQTGPIIWGEPGTNGQHAFYQLIHQGTKLIPCDFIAPAVSHNPVGDHHAKLLSNFFAQTEALAFGKSKETVEAEFAAAGKTTEEVAHLIPSKVFAGNNPTNSILVNKITPQTLGQLIAMYEQKIFVQGVIWNIFSFDQWGVELGKQLAGQILPELTTVNAVDSHDSSTNGLINAWKAWK.

Glu357 functions as the Proton donor in the catalytic mechanism. Catalysis depends on residues His388 and Lys516.

This sequence belongs to the GPI family.

It localises to the cytoplasm. It carries out the reaction alpha-D-glucose 6-phosphate = beta-D-fructose 6-phosphate. It participates in carbohydrate biosynthesis; gluconeogenesis. It functions in the pathway carbohydrate degradation; glycolysis; D-glyceraldehyde 3-phosphate and glycerone phosphate from D-glucose: step 2/4. Catalyzes the reversible isomerization of glucose-6-phosphate to fructose-6-phosphate. In Psychromonas ingrahamii (strain DSM 17664 / CCUG 51855 / 37), this protein is Glucose-6-phosphate isomerase.